The following is a 106-amino-acid chain: Iron-sulfur cluster assembly protein CyaY (106 aa).

Belongs to the frataxin family.

Involved in iron-sulfur (Fe-S) cluster assembly. May act as a regulator of Fe-S biogenesis. The sequence is that of Iron-sulfur cluster assembly protein CyaY from Shigella flexneri.